The sequence spans 336 residues: Fructokinase-2 (336 aa).

Belongs to the carbohydrate kinase PfkB family. As to expression, expressed in stem, sheaths, anthers, and panicles (at protein level).

The enzyme catalyses D-fructose + ATP = D-fructose 6-phosphate + ADP + H(+). The protein operates within glycan biosynthesis; starch biosynthesis. With respect to regulation, strongly inhibited at high fructose concentration. May play an important role in maintaining the flux of carbon towards starch formation in endosperm. May also be involved in a sugar-sensing pathway. This chain is Fructokinase-2 (FRK2), found in Oryza sativa subsp. japonica (Rice).